The sequence spans 185 residues: Dense granule protein 2 (185 aa).

The N-terminal stretch at 1–23 (MFAVKHCLLVVAVGALVNVSVRA) is a signal peptide. Asparagine 18 carries N-linked (GlcNAc...) asparagine glycosylation. 2 disordered regions span residues 41-75 (GKPLDERAVGGKGEHTPPLPDERQQEPEEPVSQRA) and 142-185 (ANVE…DFSQ). Basic and acidic residues predominate over residues 43–66 (PLDERAVGGKGEHTPPLPDERQQE).

In terms of processing, may also be O-glycosylated. The N-terminus is blocked.

Its subcellular location is the parasitophorous vacuole. Its function is as follows. Major granular component involved in excreted-secreted antigen (ESA) immunity. Possibly acts in conjunction with GRA1. The chain is Dense granule protein 2 (GRA2) from Toxoplasma gondii.